A 390-amino-acid polypeptide reads, in one-letter code: Chorismate synthase (390 aa).

NADP(+)-binding residues include arginine 39 and arginine 45. FMN is bound by residues 132–134, 253–254, glycine 298, 313–317, and arginine 339; these read RSS, NA, and KPIPT.

Belongs to the chorismate synthase family. Homotetramer. The cofactor is FMNH2.

It carries out the reaction 5-O-(1-carboxyvinyl)-3-phosphoshikimate = chorismate + phosphate. Its pathway is metabolic intermediate biosynthesis; chorismate biosynthesis; chorismate from D-erythrose 4-phosphate and phosphoenolpyruvate: step 7/7. Catalyzes the anti-1,4-elimination of the C-3 phosphate and the C-6 proR hydrogen from 5-enolpyruvylshikimate-3-phosphate (EPSP) to yield chorismate, which is the branch point compound that serves as the starting substrate for the three terminal pathways of aromatic amino acid biosynthesis. This reaction introduces a second double bond into the aromatic ring system. This chain is Chorismate synthase, found in Bacillus licheniformis (strain ATCC 14580 / DSM 13 / JCM 2505 / CCUG 7422 / NBRC 12200 / NCIMB 9375 / NCTC 10341 / NRRL NRS-1264 / Gibson 46).